A 437-amino-acid polypeptide reads, in one-letter code: Protein farnesyltransferase subunit beta (437 aa).

5 PFTB repeats span residues 123-164, 174-215, 222-263, 270-312, and 332-374; these read ATDV…CIIG, REKL…SLTN, FEGT…VILK, LKSL…PLLH, and QQAL…SIAQ. (2E,6E)-farnesyl diphosphate-binding positions include 248–251 and 291–294; these read HGGY and RCNK. Zn(2+)-binding residues include Asp-297 and Cys-299. (2E,6E)-farnesyl diphosphate is bound at residue 300-303; that stretch reads YSFW. Zn(2+) is bound at residue His-362. A Phosphoserine modification is found at Ser-432. A Phosphothreonine modification is found at Thr-436.

Belongs to the protein prenyltransferase subunit beta family. As to quaternary structure, heterodimer of FNTA and FNTB. The cofactor is Zn(2+).

The catalysed reaction is L-cysteinyl-[protein] + (2E,6E)-farnesyl diphosphate = S-(2E,6E)-farnesyl-L-cysteinyl-[protein] + diphosphate. In terms of biological role, essential subunit of the farnesyltransferase complex. Catalyzes the transfer of a farnesyl moiety from farnesyl diphosphate to a cysteine at the fourth position from the C-terminus of several proteins having the C-terminal sequence Cys-aliphatic-aliphatic-X. The chain is Protein farnesyltransferase subunit beta (Fntb) from Rattus norvegicus (Rat).